A 753-amino-acid polypeptide reads, in one-letter code: Ion-translocating oxidoreductase complex subunit C (753 aa).

2 4Fe-4S ferredoxin-type domains span residues 367–397 (EMGE…QQLY) and 407–436 (KATA…VQYF). Positions 377, 380, 383, 387, 416, 419, 422, and 426 each coordinate [4Fe-4S] cluster. Disordered regions lie at residues 517–561 (AKPD…RKAA), 606–625 (RKAE…PVDP), 640–659 (RKAE…PVDP), and 705–735 (AKAR…AVAA). Residues 526-537 (AAREARKAEARA) show a composition bias toward basic and acidic residues. Composition is skewed to low complexity over residues 610–622 (QQVA…VAEP), 644–656 (QQVA…VAEP), and 712–735 (QQAA…AVAA).

This sequence belongs to the 4Fe4S bacterial-type ferredoxin family. RnfC subfamily. In terms of assembly, the complex is composed of six subunits: RnfA, RnfB, RnfC, RnfD, RnfE and RnfG. [4Fe-4S] cluster is required as a cofactor.

The protein localises to the cell inner membrane. Its function is as follows. Part of a membrane-bound complex that couples electron transfer with translocation of ions across the membrane. The polypeptide is Ion-translocating oxidoreductase complex subunit C (Klebsiella pneumoniae (strain 342)).